The primary structure comprises 469 residues: Cysteine--tRNA ligase (469 aa).

C33 serves as a coordination point for Zn(2+). The 'HIGH' region motif lies at 35–45 (ATVQGLPHIGH). Residues C211, H236, and E240 each coordinate Zn(2+). The 'KMSKS' region signature appears at 267–271 (KMSKS). K270 is an ATP binding site.

It belongs to the class-I aminoacyl-tRNA synthetase family. Monomer. It depends on Zn(2+) as a cofactor.

It is found in the cytoplasm. It catalyses the reaction tRNA(Cys) + L-cysteine + ATP = L-cysteinyl-tRNA(Cys) + AMP + diphosphate. This is Cysteine--tRNA ligase (cysS) from Mycobacterium bovis (strain ATCC BAA-935 / AF2122/97).